Here is a 181-residue protein sequence, read N- to C-terminus: uncharacterized protein (181 aa).

Residues 151–181 (AQKKKDFQEPENKHEQLTSTKAPCQENWSDF) form a disordered region. Over residues 154-166 (KKDFQEPENKHEQ) the composition is skewed to basic and acidic residues. The span at 167–181 (LTSTKAPCQENWSDF) shows a compositional bias: polar residues.

This is an uncharacterized protein from Caenorhabditis elegans.